A 496-amino-acid chain; its full sequence is Angiopoietin-2 (496 aa).

An N-terminal signal peptide occupies residues 1-18 (MWQIVFFTLSCDLVLAAA). N-linked (GlcNAc...) asparagine glycans are attached at residues asparagine 89, asparagine 119, asparagine 133, asparagine 151, asparagine 240, and asparagine 304. Residues 166-248 (STNKLEKQIL…VNNSVLQKQQ (83 aa)) are a coiled coil. The Fibrinogen C-terminal domain maps to 275 to 495 (KEEQISFRDC…ATTMMIRPAD (221 aa)). A disulfide bridge links cysteine 284 with cysteine 313. Ca(2+)-binding residues include aspartate 429, aspartate 431, cysteine 433, and cysteine 435. Cystine bridges form between cysteine 433–cysteine 435 and cysteine 437–cysteine 450.

In terms of assembly, interacts with TEK/TIE2, competing for the same binding site as ANGPT1. Interacts with ITGA5. Interacts with SVEP1/polydom. Interacts with THBD; this interaction significantly inhibits the generation of activated PC and TAFIa/CPB2 by the thrombin/thrombomodulin complex.

It is found in the secreted. Functionally, binds to TEK/TIE2, competing for the ANGPT1 binding site, and modulating ANGPT1 signaling. Can induce tyrosine phosphorylation of TEK/TIE2 in the absence of ANGPT1. In the absence of angiogenic inducers, such as VEGF, ANGPT2-mediated loosening of cell-matrix contacts may induce endothelial cell apoptosis with consequent vascular regression. In concert with VEGF, it may facilitate endothelial cell migration and proliferation, thus serving as a permissive angiogenic signal. Involved in the regulation of lymphangiogenesis. This Homo sapiens (Human) protein is Angiopoietin-2 (ANGPT2).